The chain runs to 257 residues: Beta-fibrinogenase (257 aa).

A signal peptide spans 1–18; sequence MVLIRVLANLLLLQLSHA. Positions 19–24 are excised as a propeptide; sequence QKSSEL. The Peptidase S1 domain maps to 25–248; the sequence is VVGGDECNIN…YTDWIQSIIA (224 aa). Cystine bridges form between cysteine 31–cysteine 162, cysteine 49–cysteine 65, cysteine 97–cysteine 255, cysteine 141–cysteine 209, cysteine 173–cysteine 188, and cysteine 199–cysteine 224. Asparagine 44 carries an N-linked (GlcNAc...) asparagine glycan. The active-site Charge relay system is histidine 64. Asparagine 78 and asparagine 102 each carry an N-linked (GlcNAc...) asparagine glycan. Residue aspartate 109 is the Charge relay system of the active site. Asparagine 153 and asparagine 169 each carry an N-linked (GlcNAc...) asparagine glycan. The active-site Charge relay system is the serine 203. Asparagine 250 is a glycosylation site (N-linked (GlcNAc...) asparagine).

As to quaternary structure, monomer. In terms of processing, glycosylated. Contains 23.0% of hexoses, 8.3% of hexosamines and 1.0% of sialic acids. In terms of tissue distribution, expressed by the venom gland.

Its subcellular location is the secreted. With respect to regulation, inhibited by diisopropylfluorophosphate (DFP) and PMSF. Its function is as follows. Snake venom serine protease that has fibrinogenolytic activities by hydrolyzing the beta chain of fibrinogen (FGB). Typical arginine esterase which hydrolyzes esters and amides of arginine. The protein is Beta-fibrinogenase of Macrovipera lebetinus (Levantine viper).